Here is a 409-residue protein sequence, read N- to C-terminus: Adenosine receptor A2a (409 aa).

The Extracellular segment spans residues 1–4 (MSSS). A helical membrane pass occupies residues 5–29 (VYITVELVIAVLAILGNVLVCWAVW). Topologically, residues 30–39 (INSNLQNVTN) are cytoplasmic. The chain crosses the membrane as a helical span at residues 40-63 (YFVVSLAAADIAVGVLAIPFAITI). At 64–74 (STGFCAACHGC) the chain is on the extracellular side. Disulfide bonds link C68–C156, C71–C143, and C74–C163. The chain crosses the membrane as a helical span at residues 75-97 (LFFACFVLVLTQSSIFSLLTITI). The Cytoplasmic segment spans residues 98–117 (DRYIAIRIPLRYNGLVTCTR). Residues 118 to 140 (AKGIIAICWVLSFAIGLTPMLGW) form a helical membrane-spanning segment. Over 141 to 170 (NNCSQPKGDKNHSESCDEGQVTCLFEDVVP) the chain is Extracellular. N142 and N151 each carry an N-linked (GlcNAc...) asparagine glycan. Position 166 (E166) interacts with adenosine. Residues 171–195 (MNYMVYYNFFAFVLVPLLLMLGIYL) traverse the membrane as a helical segment. Residues 196–231 (RIFLAARRQLKQMESQPLPGERTRSTLQKEVHPAKS) are Cytoplasmic-facing. Residues 232-255 (LAIIVGLFALCCLPLNIINCFTFF) traverse the membrane as a helical segment. N250 is an adenosine binding site. A disulfide bond links C256 and C259. Residues 256–263 (CPECDHAP) are Extracellular-facing. A helical membrane pass occupies residues 264 to 287 (PWLMYLTIILSHGNSVVNPLIYAY). S274 and H275 together coordinate adenosine. At 288–409 (RIREFRQTFR…PPAHGGAGVS (122 aa)) the chain is on the cytoplasmic side. Disordered regions lie at residues 316-336 (TSAR…LRLN) and 369-409 (QRSH…AGVS).

Belongs to the G-protein coupled receptor 1 family. In terms of assembly, interacts (via cytoplasmic C-terminal domain) with USP4; the interaction is direct. May interact with DRD4. Interacts with NECAB2. Interacts (via cytoplasmic C-terminal domain) with GAS2L2; interaction enhances receptor-mediated adenylyl cyclase activity. Ubiquitinated. Deubiquitinated by USP4; leading to stabilization and expression at the cell surface.

Its subcellular location is the cell membrane. In terms of biological role, receptor for adenosine. The activity of this receptor is mediated by G proteins which activate adenylyl cyclase. The protein is Adenosine receptor A2a (ADORA2A) of Cavia porcellus (Guinea pig).